The sequence spans 591 residues: V-type ATP synthase alpha chain (591 aa).

232 to 239 is an ATP binding site; that stretch reads GPFGAGKT.

It belongs to the ATPase alpha/beta chains family.

It catalyses the reaction ATP + H2O + 4 H(+)(in) = ADP + phosphate + 5 H(+)(out). Functionally, produces ATP from ADP in the presence of a proton gradient across the membrane. The V-type alpha chain is a catalytic subunit. The sequence is that of V-type ATP synthase alpha chain from Nitrosococcus oceani (strain ATCC 19707 / BCRC 17464 / JCM 30415 / NCIMB 11848 / C-107).